Reading from the N-terminus, the 116-residue chain is Large ribosomal subunit protein bL20 (116 aa).

The protein belongs to the bacterial ribosomal protein bL20 family.

In terms of biological role, binds directly to 23S ribosomal RNA and is necessary for the in vitro assembly process of the 50S ribosomal subunit. It is not involved in the protein synthesizing functions of that subunit. The protein is Large ribosomal subunit protein bL20 of Bacteroides thetaiotaomicron (strain ATCC 29148 / DSM 2079 / JCM 5827 / CCUG 10774 / NCTC 10582 / VPI-5482 / E50).